We begin with the raw amino-acid sequence, 355 residues long: Probable dual-specificity RNA methyltransferase RlmN (355 aa).

Glutamate 92 functions as the Proton acceptor in the catalytic mechanism. Residues 98–330 (FHYGLSVCVT…TELGINCGVR (233 aa)) enclose the Radical SAM core domain. Residues cysteine 105 and cysteine 341 are joined by a disulfide bond. Residues cysteine 112, cysteine 116, and cysteine 119 each contribute to the [4Fe-4S] cluster site. Residues 164–165 (GE), serine 196, 219–221 (SLH), and asparagine 297 each bind S-adenosyl-L-methionine. The active-site S-methylcysteine intermediate is cysteine 341.

The protein belongs to the radical SAM superfamily. RlmN family. [4Fe-4S] cluster is required as a cofactor.

The protein localises to the cytoplasm. The catalysed reaction is adenosine(2503) in 23S rRNA + 2 reduced [2Fe-2S]-[ferredoxin] + 2 S-adenosyl-L-methionine = 2-methyladenosine(2503) in 23S rRNA + 5'-deoxyadenosine + L-methionine + 2 oxidized [2Fe-2S]-[ferredoxin] + S-adenosyl-L-homocysteine. It catalyses the reaction adenosine(37) in tRNA + 2 reduced [2Fe-2S]-[ferredoxin] + 2 S-adenosyl-L-methionine = 2-methyladenosine(37) in tRNA + 5'-deoxyadenosine + L-methionine + 2 oxidized [2Fe-2S]-[ferredoxin] + S-adenosyl-L-homocysteine. In terms of biological role, specifically methylates position 2 of adenine 2503 in 23S rRNA and position 2 of adenine 37 in tRNAs. The protein is Probable dual-specificity RNA methyltransferase RlmN of Oceanobacillus iheyensis (strain DSM 14371 / CIP 107618 / JCM 11309 / KCTC 3954 / HTE831).